A 152-amino-acid polypeptide reads, in one-letter code: Small ribosomal subunit protein uS15 (152 aa).

A compositionally biased stretch (basic residues) spans 1-19; sequence MAKMHTRRKGRSRSTRPVR. Residues 1 to 21 are disordered; the sequence is MAKMHTRRKGRSRSTRPVRKT.

It belongs to the universal ribosomal protein uS15 family. Part of the 30S ribosomal subunit.

This is Small ribosomal subunit protein uS15 from Methanocella arvoryzae (strain DSM 22066 / NBRC 105507 / MRE50).